Reading from the N-terminus, the 254-residue chain is Nickel import ATP-binding protein NikD (254 aa).

Residues 2–241 (PQQIELRNIT…PKHTVTRSLV (240 aa)) enclose the ABC transporter domain. Position 36–43 (36–43 (GGSGSGKS)) interacts with ATP.

It belongs to the ABC transporter superfamily. Nickel importer (TC 3.A.1.5.3) family. In terms of assembly, the complex is composed of two ATP-binding proteins (NikD and NikE), two transmembrane proteins (NikB and NikC) and a solute-binding protein (NikA).

It is found in the cell inner membrane. It carries out the reaction Ni(2+)(out) + ATP + H2O = Ni(2+)(in) + ADP + phosphate + H(+). In terms of biological role, part of the ABC transporter complex NikABCDE involved in nickel import. Responsible for energy coupling to the transport system. The sequence is that of Nickel import ATP-binding protein NikD from Shigella flexneri.